The following is a 390-amino-acid chain: Aspergillopepsin-1 (390 aa).

The signal sequence occupies residues 1–19; sequence MVNTSLLAALTAYAVAVAA. A propeptide spans 20-67 (activation peptide); the sequence is APTAPQVKGFSVNQVAVPKGVYRHPAAQLAKAYGKYHATVPTQVAAAA. In terms of domain architecture, Peptidase A1 spans 84-387; sequence YITQVTVGDD…DASGPRLGFA (304 aa). Catalysis depends on residues aspartate 100 and aspartate 281.

The protein belongs to the peptidase A1 family. In terms of assembly, monomer.

The protein localises to the secreted. The catalysed reaction is Hydrolysis of proteins with broad specificity. Generally favors hydrophobic residues in P1 and P1', but also accepts Lys in P1, which leads to activation of trypsinogen. Does not clot milk.. Inhibited by the microbial peptide pepstatin A. Secreted aspartic endopeptidase that allows assimilation of proteinaceous substrates. The scissile peptide bond is attacked by a nucleophilic water molecule activated by two aspartic residues in the active site. Shows a broad primary substrate specificity. Favors hydrophobic residues at the P1 and P1' positions, but also accepts a lysine residue in the P1 position, leading to the activation of trypsinogen and chymotrypsinogen A. Hydrolyzes myoglobin, hemoglobin and other natural proteins. Hydrolyzes equine myoglobin between positions 'Met-1' and 'Gly-2', 'Lys-43' and 'Phe-44', and 'Leu-70' and 'Thr-71'. This Aspergillus pseudoglaucus (Eurotium repens) protein is Aspergillopepsin-1 (pepA).